A 440-amino-acid chain; its full sequence is Glutamyl-tRNA reductase (440 aa).

Substrate-binding positions include 40-43, S100, 105-107, and Q111; these read TCNR and ERE. The Nucleophile role is filled by C41. 181-186 serves as a coordination point for NADP(+); sequence GTGAYA.

This sequence belongs to the glutamyl-tRNA reductase family. As to quaternary structure, homodimer.

It carries out the reaction (S)-4-amino-5-oxopentanoate + tRNA(Glu) + NADP(+) = L-glutamyl-tRNA(Glu) + NADPH + H(+). Its pathway is porphyrin-containing compound metabolism; protoporphyrin-IX biosynthesis; 5-aminolevulinate from L-glutamyl-tRNA(Glu): step 1/2. In terms of biological role, catalyzes the NADPH-dependent reduction of glutamyl-tRNA(Glu) to glutamate 1-semialdehyde (GSA). This Renibacterium salmoninarum (strain ATCC 33209 / DSM 20767 / JCM 11484 / NBRC 15589 / NCIMB 2235) protein is Glutamyl-tRNA reductase.